The chain runs to 262 residues: Small ribosomal subunit protein uS2 (262 aa).

Residues 236–262 (AGGAAEAPAAEDVQTEEAAAPEADSAE) are disordered.

Belongs to the universal ribosomal protein uS2 family.

The sequence is that of Small ribosomal subunit protein uS2 from Psychrobacter sp. (strain PRwf-1).